The primary structure comprises 315 residues: beta-hydroxyaspartate dehydratase (315 aa).

Residue Lys53 is modified to N6-(pyridoxal phosphate)lysine. Residues Asn80, 179-183, and Thr303 each bind pyridoxal 5'-phosphate; that span reads GGGGM.

Requires pyridoxal 5'-phosphate as cofactor.

It carries out the reaction (3S)-3-hydroxy-D-aspartate = iminosuccinate + H2O. Functionally, catalyzes the dehydration of (2R,3S)-beta-hydroxyaspartate ((3S)-3-hydroxy-D-aspartate) into iminosuccinate. Is essential for the growth of P.denitrificans in the presence of glycolate and glyoxylate since it functions in glyoxylate assimilation via the beta-hydroxyaspartate cycle (BHAC). The chain is beta-hydroxyaspartate dehydratase from Paracoccus denitrificans (strain Pd 1222).